The sequence spans 214 residues: Probable nicotinate-nucleotide adenylyltransferase (214 aa).

Belongs to the NadD family.

It carries out the reaction nicotinate beta-D-ribonucleotide + ATP + H(+) = deamido-NAD(+) + diphosphate. It participates in cofactor biosynthesis; NAD(+) biosynthesis; deamido-NAD(+) from nicotinate D-ribonucleotide: step 1/1. In terms of biological role, catalyzes the reversible adenylation of nicotinate mononucleotide (NaMN) to nicotinic acid adenine dinucleotide (NaAD). This Pelodictyon phaeoclathratiforme (strain DSM 5477 / BU-1) protein is Probable nicotinate-nucleotide adenylyltransferase.